A 436-amino-acid chain; its full sequence is Methanethiol oxidase (436 aa).

The signal sequence occupies residues 1-24 (MKRREFGALAAGALAMGLPFRAFA).

This sequence belongs to the selenium-binding protein family.

It is found in the periplasm. It catalyses the reaction methanethiol + O2 + H2O = hydrogen sulfide + formaldehyde + H2O2 + H(+). The protein operates within organosulfur degradation. Catalyzes the oxidation of methanethiol. The chain is Methanethiol oxidase from Ruegeria pomeroyi (strain ATCC 700808 / DSM 15171 / DSS-3) (Silicibacter pomeroyi).